The sequence spans 499 residues: Probable cytosol aminopeptidase (499 aa).

Mn(2+)-binding residues include lysine 263 and aspartate 268. The active site involves lysine 275. Mn(2+)-binding residues include aspartate 286, aspartate 345, and glutamate 347. The active site involves arginine 349.

The protein belongs to the peptidase M17 family. The cofactor is Mn(2+).

It localises to the cytoplasm. It catalyses the reaction Release of an N-terminal amino acid, Xaa-|-Yaa-, in which Xaa is preferably Leu, but may be other amino acids including Pro although not Arg or Lys, and Yaa may be Pro. Amino acid amides and methyl esters are also readily hydrolyzed, but rates on arylamides are exceedingly low.. The enzyme catalyses Release of an N-terminal amino acid, preferentially leucine, but not glutamic or aspartic acids.. Its function is as follows. Presumably involved in the processing and regular turnover of intracellular proteins. Catalyzes the removal of unsubstituted N-terminal amino acids from various peptides. This is Probable cytosol aminopeptidase from Bradyrhizobium sp. (strain BTAi1 / ATCC BAA-1182).